Here is a 352-residue protein sequence, read N- to C-terminus: Phosphoribosylformylglycinamidine cyclo-ligase (352 aa).

It belongs to the AIR synthase family.

Its subcellular location is the cytoplasm. The catalysed reaction is 2-formamido-N(1)-(5-O-phospho-beta-D-ribosyl)acetamidine + ATP = 5-amino-1-(5-phospho-beta-D-ribosyl)imidazole + ADP + phosphate + H(+). The protein operates within purine metabolism; IMP biosynthesis via de novo pathway; 5-amino-1-(5-phospho-D-ribosyl)imidazole from N(2)-formyl-N(1)-(5-phospho-D-ribosyl)glycinamide: step 2/2. This chain is Phosphoribosylformylglycinamidine cyclo-ligase, found in Pseudomonas fluorescens (strain Pf0-1).